Here is a 1074-residue protein sequence, read N- to C-terminus: Zinc finger protein 518B (1074 aa).

A compositionally biased stretch (polar residues) spans 12–24 (HLNGGHNSLTMSP). The segment at 12 to 36 (HLNGGHNSLTMSPKQPDANGAPRPN) is disordered. 2 C2H2-type zinc fingers span residues 162-184 (FICS…LVKH) and 190-213 (YQCE…KRVH). Glycyl lysine isopeptide (Lys-Gly) (interchain with G-Cter in SUMO2) cross-links involve residues lysine 482, lysine 491, and lysine 558. Positions 568 to 590 (SNRKQEDNQTEEHKAVSTVGQIS) are disordered. The segment covering 570–582 (RKQEDNQTEEHKA) has biased composition (basic and acidic residues). A Glycyl lysine isopeptide (Lys-Gly) (interchain with G-Cter in SUMO2) cross-link involves residue lysine 594. 2 disordered regions span residues 603–632 (TGED…DGPV) and 678–704 (KPSS…KATS). Residues 604 to 622 (GEDRSQQPGDKPLELKNSE) show a composition bias toward basic and acidic residues. The span at 693 to 704 (GQASKGTSKATS) shows a compositional bias: polar residues. Glycyl lysine isopeptide (Lys-Gly) (interchain with G-Cter in SUMO2) cross-links involve residues lysine 809, lysine 846, and lysine 860. The C2H2-type 3 zinc-finger motif lies at 1036 to 1058 (FKCWFCGRLYEDQEEWMSHGQRH).

This sequence belongs to the krueppel C2H2-type zinc-finger protein family.

It localises to the nucleus. Functionally, through its association with the EHMT1-EHMT2/G9A and PRC2/EED-EZH2 histone methyltransferase complexes may function in gene silencing, regulating repressive post-translational methylation of histone tails at promoters of target genes. This chain is Zinc finger protein 518B (ZNF518B), found in Homo sapiens (Human).